The following is a 485-amino-acid chain: Trk system potassium uptake protein TrkG (485 aa).

Over 1-5 (MNTSH) the chain is Cytoplasmic. The helical transmembrane segment at 6–32 (VRVVTHMCGFLVWLYSLSMLPPMVVAL) threads the bilayer. The Periplasmic portion of the chain corresponds to 33–38 (FYKEKS). The chain crosses the membrane as a helical span at residues 39 to 60 (LFVFFITFVIFFCIGGGAWYTT). At 61 to 68 (KKSGIQLR) the chain is on the cytoplasmic side. The helical transmembrane segment at 69–93 (TRDGFIIIVMFWILFSVISAFPLWI) threads the bilayer. The helical; Pore-forming intramembrane region spans 101–112 (FIDALFEGVSGI). An intramembrane segment occupies 113-118 (TTTGAT). Residues 113-118 (TTTGAT) are selectivity filter part 1. Residues T114 and T115 each coordinate K(+). Residues 119–127 (VIDDVSSLP) lie on the Periplasmic side of the membrane. A helical membrane pass occupies residues 128–153 (RAYLYYRSQLNFIGGLGVIVLAVAVL). Over 154-180 (PLLGIGGAKLYQSEMPGPFKDDKLTPR) the chain is Cytoplasmic. A helical transmembrane segment spans residues 181 to 205 (LADTSRTLWITYSLLGIACIVCYRL). The Periplasmic portion of the chain corresponds to 206 to 208 (AGM). An intramembrane region is located at residue P209. Residues 210 to 221 (LFDAICHGISTV) constitute an intramembrane region (helical; Pore-forming). Residues 222–227 (SLGGFS) lie within the membrane without spanning it. A selectivity filter part 2 region spans residues 222–227 (SLGGFS). L223 and G224 together coordinate K(+). Residues 228 to 237 (THSESIGYFN) lie on the Periplasmic side of the membrane. The segment at residues 238 to 253 (NYLVELVAGSFSLLSA) is an intramembrane region (helical). Residues 277-297 (LRFFLLIALGVIIVTSFQVWH) form a helical membrane-spanning segment. Positions 303-318 (LHGSFIHSFFLASSML) form an intramembrane region, helical; Pore-forming. The stretch at 319 to 324 (TDNGLA) is an intramembrane region. Residues 319–324 (TDNGLA) are selectivity filter part 3. The K(+) site is built by D320 and N321. Residues 325-332 (TQDYASWP) lie on the Periplasmic side of the membrane. The helical intramembrane region spans 333–344 (THTIVFLLLSSF). The note=Loop between two helices intramembrane region spans 345 to 357 (FGGCIGSTCGGIK). The helical transmembrane segment at 392–419 (TDRVMRSVWSFFFLYTLFTVFFILVLNG) threads the bilayer. The Periplasmic segment spans residues 420-421 (MG). The stretch at 422–423 (YD) is an intramembrane region. An intramembrane region (helical; Pore-forming) is located at residues 424–434 (FLTSFATVAAC). The stretch at 435-441 (INNMGLG) is an intramembrane region. Positions 436-441 (NNMGLG) are selectivity filter part 4. 2 residues coordinate K(+): N437 and M438. The Periplasmic segment spans residues 442–453 (FGATASSFGVLN). The helical intramembrane region spans 454 to 465 (DIAKCLMCIAMI).

This sequence belongs to the TrkH potassium transport family.

It is found in the cell inner membrane. Its function is as follows. Low-affinity potassium transport system. Interacts with Trk system potassium uptake protein TrkA. Requires TrkE (sapD) for maximal transport activity, low activity is seen in its absence; no further stimulation is seen with SapF. Transport in the absence of SapD is dependent on a high membrane potential and a high cytoplasmic ATP concentration, suggesting this protein may be able to interact with other ATP-binding proteins. Can transport potassium and rubidium. The sequence is that of Trk system potassium uptake protein TrkG (trkG) from Escherichia coli (strain K12).